A 189-amino-acid chain; its full sequence is Parkinson disease protein 7 homolog (189 aa).

An N-acetylalanine modification is found at Ala-2. S-palmitoyl cysteine attachment occurs at residues Cys-46 and Cys-53. Tyr-67 is subject to Phosphotyrosine. The active-site Nucleophile is Cys-106. The residue at position 106 (Cys-106) is a Cysteine sulfinic acid (-SO2H); alternate. Cys-106 carries the S-palmitoyl cysteine; alternate lipid modification. His-126 is an active-site residue. A Glycyl lysine isopeptide (Lys-Gly) (interchain with G-Cter in SUMO) cross-link involves residue Lys-130. Lys-148 is modified (N6-acetyllysine). Lys-182 carries the post-translational modification N6-succinyllysine.

It belongs to the peptidase C56 family. As to quaternary structure, homodimer. Binds EFCAB6/DJBP and PIAS2. Part of a ternary complex containing PARK7, EFCAB6/DJBP and AR. Interacts (via N-terminus) with OTUD7B. Interacts with BBS1, HIPK1, CLCF1 and MTERF. Forms a complex with PINK1 and PRKN. Interacts (via C-terminus) with NCF1; the interaction is enhanced by LPS and modulates NCF1 phosphorylation and membrane translocation. Interacts with NENF. Deglycase activity does not require glutathione as a cofactor, however, glycated glutathione constitutes a PARK7 substrate. serves as cofactor. Post-translationally, sumoylated on Lys-130 by PIAS2 or PIAS4; which is essential for cell-growth promoting activity and transforming activity. Undergoes cleavage of a C-terminal peptide and subsequent activation of protease activity in response to oxidative stress.

It is found in the cell membrane. The protein resides in the cytoplasm. It localises to the nucleus. The protein localises to the membrane raft. Its subcellular location is the mitochondrion. It is found in the endoplasmic reticulum. The enzyme catalyses N(omega)-(1-hydroxy-2-oxopropyl)-L-arginyl-[protein] + H2O = lactate + L-arginyl-[protein] + H(+). It carries out the reaction N(6)-(1-hydroxy-2-oxopropyl)-L-lysyl-[protein] + H2O = lactate + L-lysyl-[protein] + H(+). The catalysed reaction is S-(1-hydroxy-2-oxopropyl)-L-cysteinyl-[protein] + H2O = lactate + L-cysteinyl-[protein] + H(+). It catalyses the reaction N(omega)-(1-hydroxy-2-oxoethyl)-L-arginyl-[protein] + H2O = L-arginyl-[protein] + glycolate + H(+). The enzyme catalyses N(6)-(1-hydroxy-2-oxoethyl)-L-lysyl-[protein] + H2O = glycolate + L-lysyl-[protein] + H(+). It carries out the reaction S-(1-hydroxy-2-oxoethyl)-L-cysteinyl-[protein] + H2O = glycolate + L-cysteinyl-[protein] + H(+). The catalysed reaction is N(2)-(1-hydroxy-2-oxopropyl)-dGTP + H2O = lactate + dGTP + H(+). It catalyses the reaction N(2)-(1-hydroxy-2-oxopropyl)-GTP + H2O = lactate + GTP + H(+). The enzyme catalyses N(2)-(1-hydroxy-2-oxopropyl)-GDP + H2O = lactate + GDP + H(+). It carries out the reaction N(2)-(1-hydroxy-2-oxopropyl)-GMP + H2O = lactate + GMP + H(+). The catalysed reaction is N(2)-(1-hydroxy-2-oxoethyl)-dGTP + H2O = dGTP + glycolate + H(+). It catalyses the reaction N(2)-(1-hydroxy-2-oxoethyl)-GTP + H2O = glycolate + GTP + H(+). The enzyme catalyses N(2)-(1-hydroxy-2-oxoethyl)-GDP + H2O = glycolate + GDP + H(+). It carries out the reaction N(2)-(1-hydroxy-2-oxoethyl)-GMP + H2O = glycolate + GMP + H(+). The catalysed reaction is an N(2)-(1-hydroxy-2-oxopropyl)-guanosine in RNA + H2O = a guanosine in RNA + lactate + H(+). It catalyses the reaction an N(2)-(1-hydroxy-2-oxopropyl)-2'-deoxyguanosine in DNA + H2O = a 2'-deoxyguanosine in DNA + lactate + H(+). The enzyme catalyses an N(2)-(1-hydroxy-2-oxoethyl)-guanosine in RNA + H2O = a guanosine in RNA + glycolate + H(+). It carries out the reaction an N(2)-(1-hydroxy-2-oxoethyl)-2'-deoxyguanosine in DNA + H2O = a 2'-deoxyguanosine in DNA + glycolate + H(+). Functionally, multifunctional protein with controversial molecular function which plays an important role in cell protection against oxidative stress and cell death acting as oxidative stress sensor and redox-sensitive chaperone and protease. It is involved in neuroprotective mechanisms like the stabilization of NFE2L2 and PINK1 proteins, male fertility as a positive regulator of androgen signaling pathway as well as cell growth and transformation through, for instance, the modulation of NF-kappa-B signaling pathway. Has been described as a protein and nucleotide deglycase that catalyzes the deglycation of the Maillard adducts formed between amino groups of proteins or nucleotides and reactive carbonyl groups of glyoxals. But this function is rebuted by other works. As a protein deglycase, repairs methylglyoxal- and glyoxal-glycated proteins, and releases repaired proteins and lactate or glycolate, respectively. Deglycates cysteine, arginine and lysine residues in proteins, and thus reactivates these proteins by reversing glycation by glyoxals. Acts on early glycation intermediates (hemithioacetals and aminocarbinols), preventing the formation of advanced glycation endproducts (AGE) that cause irreversible damage. Also functions as a nucleotide deglycase able to repair glycated guanine in the free nucleotide pool (GTP, GDP, GMP, dGTP) and in DNA and RNA. Is thus involved in a major nucleotide repair system named guanine glycation repair (GG repair), dedicated to reversing methylglyoxal and glyoxal damage via nucleotide sanitization and direct nucleic acid repair. Protects histones from adduction by methylglyoxal, controls the levels of methylglyoxal-derived argininine modifications on chromatin. Able to remove the glycations and restore histone 3, histone glycation disrupts both local and global chromatin architecture by altering histone-DNA interactions as well as histone acetylation and ubiquitination levels. Displays a very low glyoxalase activity that may reflect its deglycase activity. Eliminates hydrogen peroxide and protects cells against hydrogen peroxide-induced cell death. Required for correct mitochondrial morphology and function as well as for autophagy of dysfunctional mitochondria. Plays a role in regulating expression or stability of the mitochondrial uncoupling proteins SLC25A14 and SLC25A27 in dopaminergic neurons of the substantia nigra pars compacta and attenuates the oxidative stress induced by calcium entry into the neurons via L-type channels during pacemaking. Regulates astrocyte inflammatory responses, may modulate lipid rafts-dependent endocytosis in astrocytes and neuronal cells. In pancreatic islets, involved in the maintenance of mitochondrial reactive oxygen species (ROS) levels and glucose homeostasis in an age- and diet dependent manner. Protects pancreatic beta cells from cell death induced by inflammatory and cytotoxic setting. Binds to a number of mRNAs containing multiple copies of GG or CC motifs and partially inhibits their translation but dissociates following oxidative stress. Metal-binding protein able to bind copper as well as toxic mercury ions, enhances the cell protection mechanism against induced metal toxicity. In macrophages, interacts with the NADPH oxidase subunit NCF1 to direct NADPH oxidase-dependent ROS production, and protects against sepsis. The protein is Parkinson disease protein 7 homolog of Chlorocebus aethiops (Green monkey).